The sequence spans 643 residues: UPF0313 protein CLD_0573 (643 aa).

One can recognise a Radical SAM core domain in the interval 295 to 566 (AIKEVKFSIT…RMQRALLQFS (272 aa)). C309, C313, and C316 together coordinate [4Fe-4S] cluster. The disordered stretch occupies residues 598 to 643 (NKPYKKSHKKNNAKNNNNHYNKNNNKNKDISKKNKKNSLSKHKKRK). The span at 600–609 (PYKKSHKKNN) shows a compositional bias: basic residues. Residues 610–621 (AKNNNNHYNKNN) show a composition bias toward low complexity. The segment covering 630-643 (KNKKNSLSKHKKRK) has biased composition (basic residues).

This sequence belongs to the UPF0313 family. Requires [4Fe-4S] cluster as cofactor.

This Clostridium botulinum (strain Okra / Type B1) protein is UPF0313 protein CLD_0573.